A 244-amino-acid chain; its full sequence is 1-(5-phosphoribosyl)-5-[(5-phosphoribosylamino)methylideneamino] imidazole-4-carboxamide isomerase (244 aa).

D10 acts as the Proton acceptor in catalysis. D132 (proton donor) is an active-site residue.

Belongs to the HisA/HisF family.

The protein resides in the cytoplasm. The enzyme catalyses 1-(5-phospho-beta-D-ribosyl)-5-[(5-phospho-beta-D-ribosylamino)methylideneamino]imidazole-4-carboxamide = 5-[(5-phospho-1-deoxy-D-ribulos-1-ylimino)methylamino]-1-(5-phospho-beta-D-ribosyl)imidazole-4-carboxamide. Its pathway is amino-acid biosynthesis; L-histidine biosynthesis; L-histidine from 5-phospho-alpha-D-ribose 1-diphosphate: step 4/9. This chain is 1-(5-phosphoribosyl)-5-[(5-phosphoribosylamino)methylideneamino] imidazole-4-carboxamide isomerase, found in Xanthomonas campestris pv. campestris (strain 8004).